The chain runs to 348 residues: UDP-3-O-acylglucosamine N-acyltransferase (348 aa).

His248 serves as the catalytic Proton acceptor.

The protein belongs to the transferase hexapeptide repeat family. LpxD subfamily. In terms of assembly, homotrimer.

It carries out the reaction a UDP-3-O-[(3R)-3-hydroxyacyl]-alpha-D-glucosamine + a (3R)-hydroxyacyl-[ACP] = a UDP-2-N,3-O-bis[(3R)-3-hydroxyacyl]-alpha-D-glucosamine + holo-[ACP] + H(+). The protein operates within bacterial outer membrane biogenesis; LPS lipid A biosynthesis. Its function is as follows. Catalyzes the N-acylation of UDP-3-O-acylglucosamine using 3-hydroxyacyl-ACP as the acyl donor. Is involved in the biosynthesis of lipid A, a phosphorylated glycolipid that anchors the lipopolysaccharide to the outer membrane of the cell. In Rippkaea orientalis (strain PCC 8801 / RF-1) (Cyanothece sp. (strain PCC 8801)), this protein is UDP-3-O-acylglucosamine N-acyltransferase.